Here is a 185-residue protein sequence, read N- to C-terminus: uncharacterized protein (185 aa).

The protein to M.thermoautotrophicum MTH236.

This is an uncharacterized protein from Methanocaldococcus jannaschii (strain ATCC 43067 / DSM 2661 / JAL-1 / JCM 10045 / NBRC 100440) (Methanococcus jannaschii).